A 216-amino-acid polypeptide reads, in one-letter code: MGGNQILKQIIAKHLLDIQAVFLRPNEPFTWASGILSPIYCDNRLTLSFPEVRNDVASGISKLVKEHFPEAEMIAGTATAGIPHAALAADHLNLPMCYVRSKPKAHGKGNQIEGAVQEGQKTVVIEDLISTGGSVLEACAALQAAGCEVLGVVSIFTYGLPKAEEAFAKAELPYYSLTDYDTLTEVALENGNIHSDDLKKLQTWKRNPESKDWFKK.

Residues R100, K104, H106, and 126–134 (EDLISTGGS) contribute to the 5-phospho-alpha-D-ribose 1-diphosphate site. S130 lines the orotate pocket.

Belongs to the purine/pyrimidine phosphoribosyltransferase family. PyrE subfamily. In terms of assembly, homodimer. Interacts with BrxC. Mg(2+) is required as a cofactor.

The enzyme catalyses orotidine 5'-phosphate + diphosphate = orotate + 5-phospho-alpha-D-ribose 1-diphosphate. The protein operates within pyrimidine metabolism; UMP biosynthesis via de novo pathway; UMP from orotate: step 1/2. Its function is as follows. Catalyzes the transfer of a ribosyl phosphate group from 5-phosphoribose 1-diphosphate to orotate, leading to the formation of orotidine monophosphate (OMP). The sequence is that of Orotate phosphoribosyltransferase from Bacillus subtilis (strain 168).